The chain runs to 640 residues: MKFQMKMKSELCRTYKYWLILLVLWLSGVTQRETGVLIVDADCIPPNGCKALAYYRLKQGDDLEKLQGRFQTNNSEVLAYNPQLVDANSIQAGTNIYLPFDCLCLNGELVHRFSYTVTTNDTAEKVVDVTYQKLTTVGAVRSASNSGDLSSIYSGQSLTIPVRCYCGDPNVDPKYGLFSTYVVQADDQLTSLSTNFSVDADVISKFNSDTRNLSPDSIIFIPSKAANGSFPPFSGYVLGTVHWRSNVGIIVGVVVGGIVLAVLLLFALIFGFKHFRRRKLAKEPTMQQSGLLSSSSMAGSKPSRSGSTMLPVPKSVEFTYEELAAATDNFSLAKKIGQGGFASVYYGVIRDQKLAIKKMTLQCTKEFLAELQVLTNVHHTNLVQLIGYCTTNSLFLVYEYIENGTLDHHLRRRKSDDKPPLSWLQRVQICLDSARGLEYIHEHTKPTYIHRDIKSANILLDDNFRAKVADFGLAKLAEEGTGTGIVGTFGYMPPEYALYGEVSPKLDVYAFGVVLFEIISGRVAISSALPSENDQQSPAQNRESRTLTSFFEPVLNDPDGKTLLPKCIDPALNGEYSLDAVWKMAQLARRCTHQSPDMRPTMRFAVVQLMTLASVTQEWDVGYFSRASSQSQPPSGNDQL.

The signal sequence occupies residues 1–31 (MKFQMKMKSELCRTYKYWLILLVLWLSGVTQ). The Extracellular portion of the chain corresponds to 32–248 (RETGVLIVDA…GTVHWRSNVG (217 aa)). 3 disulfides stabilise this stretch: C43–C104, C49–C166, and C102–C164. LysM domains follow at residues 53-98 (AYYR…NIYL), 113-160 (FSYT…SLTI), and 179-227 (STYV…KAAN). Chitin-binding positions include 119-125 (TNDTAEK) and 148-154 (DLSSIYS). Residues 249–269 (IIVGVVVGGIVLAVLLLFALI) traverse the membrane as a helical segment. Over 270-640 (FGFKHFRRRK…SQPPSGNDQL (371 aa)) the chain is Cytoplasmic. The tract at residues 286–308 (MQQSGLLSSSSMAGSKPSRSGST) is disordered. The segment covering 289–307 (SGLLSSSSMAGSKPSRSGS) has biased composition (low complexity). Residues 330–612 (FSLAKKIGQG…RFAVVQLMTL (283 aa)) enclose the Protein kinase domain. Residues 336–344 (IGQGGFASV) and K357 each bind ATP. The active-site Proton acceptor is the D452.

It belongs to the protein kinase superfamily. Ser/Thr protein kinase family.

Its subcellular location is the cell membrane. It carries out the reaction L-seryl-[protein] + ATP = O-phospho-L-seryl-[protein] + ADP + H(+). It catalyses the reaction L-threonyl-[protein] + ATP = O-phospho-L-threonyl-[protein] + ADP + H(+). In terms of biological role, lysin motif (LysM) receptor kinase required as a cell surface receptor for chitin elicitor (chitooligosaccharides) signaling leading to innate immunity in response to biotic stresses. The CERK1, MEKK1a/b, MKK1a/b/c and MPK4a/b proteins are involved in pathogen defense. The pathway induces rapid growth inhibition, cell wall depositions and accumulation of defense-related transcripts. This protein is required for response to chitin. Is able to complement the A.thaliana cerk1 mutant. The chain is Chitin elicitor receptor kinase 1 from Physcomitrium patens (Spreading-leaved earth moss).